Consider the following 146-residue polypeptide: Large ribosomal subunit protein uL22 (146 aa).

This sequence belongs to the universal ribosomal protein uL22 family. As to quaternary structure, part of the 50S ribosomal subunit.

Its function is as follows. This protein binds specifically to 23S rRNA; its binding is stimulated by other ribosomal proteins, e.g. L4, L17, and L20. It is important during the early stages of 50S assembly. It makes multiple contacts with different domains of the 23S rRNA in the assembled 50S subunit and ribosome. Functionally, the globular domain of the protein is located near the polypeptide exit tunnel on the outside of the subunit, while an extended beta-hairpin is found that lines the wall of the exit tunnel in the center of the 70S ribosome. In Nocardioides sp. (strain ATCC BAA-499 / JS614), this protein is Large ribosomal subunit protein uL22.